The sequence spans 330 residues: Ferredoxin--NADP reductase (330 aa).

Glu-35, Gln-43, Tyr-48, Val-90, Phe-123, Asp-285, and Thr-326 together coordinate FAD.

The protein belongs to the ferredoxin--NADP reductase type 2 family. In terms of assembly, homodimer. FAD serves as cofactor.

The catalysed reaction is 2 reduced [2Fe-2S]-[ferredoxin] + NADP(+) + H(+) = 2 oxidized [2Fe-2S]-[ferredoxin] + NADPH. The polypeptide is Ferredoxin--NADP reductase (Streptococcus pyogenes serotype M3 (strain ATCC BAA-595 / MGAS315)).